Reading from the N-terminus, the 385-residue chain is Polyketide synthase 1 (385 aa).

Cys-157 is an active-site residue.

It belongs to the thiolase-like superfamily. Chalcone/stilbene synthases family. As to expression, expressed in glandular trichomes.

It is found in the cytoplasm. Polyketide synthase responsible for the biosynthesis of secondary metabolites. The protein is Polyketide synthase 1 (PKSG1) of Cannabis sativa (Hemp).